A 626-amino-acid chain; its full sequence is (R)-linalool synthase 2, chloroplastic (626 aa).

Residues 1 to 21 constitute a chloroplast transit peptide; the sequence is MAFVSIAPLASRCCVHKSFVS. Residues aspartate 377, aspartate 381, and glutamate 529 each coordinate Mg(2+). The DDXXD motif motif lies at 377-381; sequence DDIYD.

It belongs to the terpene synthase family. Tpsd subfamily. Requires Mg(2+) as cofactor. Mn(2+) serves as cofactor.

The protein localises to the plastid. It localises to the chloroplast. The enzyme catalyses (2E)-geranyl diphosphate + H2O = (R)-linalool + diphosphate. The protein operates within terpene metabolism; oleoresin biosynthesis. Functionally, terpene synthase (mono-TPS) involved in the biosynthesis of monoterpene natural products included in conifer oleoresin secretions and volatile emissions; these compounds contribute to biotic and abiotic stress defense against herbivores and pathogens. Catalyzes the conversion of (2E)-geranyl diphosphate (GPP) to (R)-linalool. The chain is (R)-linalool synthase 2, chloroplastic from Picea sitchensis (Sitka spruce).